We begin with the raw amino-acid sequence, 634 residues long: Chaperone protein dnaK2 (634 aa).

Residue threonine 197 is modified to Phosphothreonine; by autocatalysis. The interval 592–634 (IGSSVYQQPGNQPPAPGTPDSNESNDKGGDDDVIDADFTETKD) is disordered. A compositionally biased stretch (acidic residues) spans 622-634 (DDVIDADFTETKD).

It belongs to the heat shock protein 70 family.

In terms of biological role, acts as a chaperone. The protein is Chaperone protein dnaK2 (dnaK2) of Prochlorococcus marinus subsp. pastoris (strain CCMP1986 / NIES-2087 / MED4).